We begin with the raw amino-acid sequence, 475 residues long: Ribulose bisphosphate carboxylase large chain (475 aa).

Positions 1-2 (MS) are excised as a propeptide. Position 3 is an N-acetylproline (proline 3). N6,N6,N6-trimethyllysine is present on lysine 14. 2 residues coordinate substrate: asparagine 123 and threonine 173. Lysine 175 serves as the catalytic Proton acceptor. Substrate is bound at residue lysine 177. Lysine 201, aspartate 203, and glutamate 204 together coordinate Mg(2+). Lysine 201 carries the post-translational modification N6-carboxylysine. Histidine 294 acts as the Proton acceptor in catalysis. Substrate contacts are provided by arginine 295, histidine 327, and serine 379.

It belongs to the RuBisCO large chain family. Type I subfamily. In terms of assembly, heterohexadecamer of 8 large chains and 8 small chains; disulfide-linked. The disulfide link is formed within the large subunit homodimers. Mg(2+) is required as a cofactor. In terms of processing, the disulfide bond which can form in the large chain dimeric partners within the hexadecamer appears to be associated with oxidative stress and protein turnover.

It is found in the plastid. The protein resides in the chloroplast. It carries out the reaction 2 (2R)-3-phosphoglycerate + 2 H(+) = D-ribulose 1,5-bisphosphate + CO2 + H2O. The enzyme catalyses D-ribulose 1,5-bisphosphate + O2 = 2-phosphoglycolate + (2R)-3-phosphoglycerate + 2 H(+). Its function is as follows. RuBisCO catalyzes two reactions: the carboxylation of D-ribulose 1,5-bisphosphate, the primary event in carbon dioxide fixation, as well as the oxidative fragmentation of the pentose substrate in the photorespiration process. Both reactions occur simultaneously and in competition at the same active site. The sequence is that of Ribulose bisphosphate carboxylase large chain from Pinus thunbergii (Japanese black pine).